Consider the following 165-residue polypeptide: Large ribosomal subunit protein uL10 (165 aa).

Belongs to the universal ribosomal protein uL10 family. As to quaternary structure, part of the ribosomal stalk of the 50S ribosomal subunit. The N-terminus interacts with L11 and the large rRNA to form the base of the stalk. The C-terminus forms an elongated spine to which L12 dimers bind in a sequential fashion forming a multimeric L10(L12)X complex.

Its function is as follows. Forms part of the ribosomal stalk, playing a central role in the interaction of the ribosome with GTP-bound translation factors. The sequence is that of Large ribosomal subunit protein uL10 from Cronobacter sakazakii (strain ATCC BAA-894) (Enterobacter sakazakii).